The primary structure comprises 121 residues: Flagellar protein FliT (121 aa).

A required for homodimerization region spans residues 1-50; sequence MNNAPHLYFAWQQLVEKSQLMLRLATEEQWDELIASEMAYVNAVQEIAHL. A fliD binding region spans residues 60-98; that stretch reads MQEQLRPMLLLILDNESKVKQLLQIRMDELAKLVGQSSV.

Belongs to the FliT family. In terms of assembly, homodimer. Interacts with FliD and FlhC.

It is found in the cytoplasm. The protein resides in the cytosol. Dual-function protein that regulates the transcription of class 2 flagellar operons and that also acts as an export chaperone for the filament-capping protein FliD. As a transcriptional regulator, acts as an anti-FlhDC factor; it directly binds FlhC, thus inhibiting the binding of the FlhC/FlhD complex to class 2 promoters, resulting in decreased expression of class 2 flagellar operons. As a chaperone, effects FliD transition to the membrane by preventing its premature polymerization, and by directing it to the export apparatus. The protein is Flagellar protein FliT of Escherichia coli O6:K15:H31 (strain 536 / UPEC).